The chain runs to 135 residues: Large ribosomal subunit protein bL19 (135 aa).

Belongs to the bacterial ribosomal protein bL19 family.

Functionally, this protein is located at the 30S-50S ribosomal subunit interface and may play a role in the structure and function of the aminoacyl-tRNA binding site. The polypeptide is Large ribosomal subunit protein bL19 (Xanthomonas campestris pv. campestris (strain 8004)).